The following is a 303-amino-acid chain: ATP synthase subunit a (303 aa).

6 helical membrane passes run 59 to 79, 122 to 142, 148 to 168, 181 to 201, 220 to 240, and 244 to 264; these read HTVM…IWGN, FLLT…VPWM, NLAV…VAGI, TGGV…LGLF, IVYF…VAAV, and FAFA…YVFA. Residues 281–290 are compositionally biased toward basic and acidic residues; that stretch reads HDDHGHDHPE. Residues 281 to 303 are disordered; it reads HDDHGHDHPEAGPSHDQGKAHHA.

This sequence belongs to the ATPase A chain family. As to quaternary structure, F-type ATPases have 2 components, CF(1) - the catalytic core - and CF(0) - the membrane proton channel. CF(1) has five subunits: alpha(3), beta(3), gamma(1), delta(1), epsilon(1). CF(0) has three main subunits: a(1), b(2) and c(9-12). The alpha and beta chains form an alternating ring which encloses part of the gamma chain. CF(1) is attached to CF(0) by a central stalk formed by the gamma and epsilon chains, while a peripheral stalk is formed by the delta and b chains.

It localises to the cell inner membrane. Key component of the proton channel; it plays a direct role in the translocation of protons across the membrane. The chain is ATP synthase subunit a from Myxococcus xanthus (strain DK1622).